The primary structure comprises 360 residues: MSKQILILPGDGIGPEIMTEAVKVLELANEKYQLGFELTHDVIGGAAIDKHGVPLADETLDRARAADAVLLGAVGGPKWDTIERDIRPERGLLKIRSQLGLFGNLRPAILYPQLADASSLKPEIVAGLDILIVRELTGGIYFGAPRGTRVLDNGERQAYDTLPYSESEIRRIAKVGFDMAMVRGKKLCSVDKANVLASSQLWREIVEQVAKDYPEVELSHMYVDNAAMQLVRAPKQFDVIVTDNLFGDILSDQASMLTGSIGMLPSASLDTANKGMYEPCHGSAPDIAGKGIANPLATILSVSMMLRYSFNLTDAADAIEKAVSVVLDQGIRTGDIWSEGKVKVGTQEMGDAVVAALRNL.

76-89 (GPKWDTIERDIRPE) lines the NAD(+) pocket. Residues arginine 96, arginine 106, arginine 134, and aspartate 224 each coordinate substrate. Residues aspartate 224, aspartate 248, and aspartate 252 each contribute to the Mg(2+) site. 282-294 (GSAPDIAGKGIAN) lines the NAD(+) pocket.

This sequence belongs to the isocitrate and isopropylmalate dehydrogenases family. LeuB type 1 subfamily. Homodimer. Mg(2+) serves as cofactor. It depends on Mn(2+) as a cofactor.

It localises to the cytoplasm. The catalysed reaction is (2R,3S)-3-isopropylmalate + NAD(+) = 4-methyl-2-oxopentanoate + CO2 + NADH. Its pathway is amino-acid biosynthesis; L-leucine biosynthesis; L-leucine from 3-methyl-2-oxobutanoate: step 3/4. In terms of biological role, catalyzes the oxidation of 3-carboxy-2-hydroxy-4-methylpentanoate (3-isopropylmalate) to 3-carboxy-4-methyl-2-oxopentanoate. The product decarboxylates to 4-methyl-2 oxopentanoate. In Pseudomonas savastanoi pv. phaseolicola (strain 1448A / Race 6) (Pseudomonas syringae pv. phaseolicola (strain 1448A / Race 6)), this protein is 3-isopropylmalate dehydrogenase.